The primary structure comprises 179 residues: Large ribosomal subunit protein uL5 (179 aa).

Belongs to the universal ribosomal protein uL5 family. As to quaternary structure, part of the 50S ribosomal subunit; part of the 5S rRNA/L5/L18/L25 subcomplex. Contacts the 5S rRNA and the P site tRNA. Forms a bridge to the 30S subunit in the 70S ribosome.

This is one of the proteins that bind and probably mediate the attachment of the 5S RNA into the large ribosomal subunit, where it forms part of the central protuberance. In the 70S ribosome it contacts protein S13 of the 30S subunit (bridge B1b), connecting the 2 subunits; this bridge is implicated in subunit movement. Contacts the P site tRNA; the 5S rRNA and some of its associated proteins might help stabilize positioning of ribosome-bound tRNAs. The polypeptide is Large ribosomal subunit protein uL5 (Marinomonas sp. (strain MWYL1)).